The sequence spans 236 residues: 7-cyano-7-deazaguanine synthase (236 aa).

12-22 contributes to the ATP binding site; that stretch reads FSGGQDSTTCL. Positions 200, 215, 218, and 221 each coordinate Zn(2+).

Belongs to the QueC family. The cofactor is Zn(2+).

The enzyme catalyses 7-carboxy-7-deazaguanine + NH4(+) + ATP = 7-cyano-7-deazaguanine + ADP + phosphate + H2O + H(+). It participates in purine metabolism; 7-cyano-7-deazaguanine biosynthesis. Its function is as follows. Catalyzes the ATP-dependent conversion of 7-carboxy-7-deazaguanine (CDG) to 7-cyano-7-deazaguanine (preQ(0)). The sequence is that of 7-cyano-7-deazaguanine synthase from Bradyrhizobium sp. (strain ORS 278).